We begin with the raw amino-acid sequence, 251 residues long: Hydroxyacylglutathione hydrolase (251 aa).

The Zn(2+) site is built by H59, H61, D63, H64, H118, D141, and H179.

This sequence belongs to the metallo-beta-lactamase superfamily. Glyoxalase II family. As to quaternary structure, monomer. It depends on Zn(2+) as a cofactor.

The enzyme catalyses an S-(2-hydroxyacyl)glutathione + H2O = a 2-hydroxy carboxylate + glutathione + H(+). The protein operates within secondary metabolite metabolism; methylglyoxal degradation; (R)-lactate from methylglyoxal: step 2/2. In terms of biological role, thiolesterase that catalyzes the hydrolysis of S-D-lactoyl-glutathione to form glutathione and D-lactic acid. In Prochlorococcus marinus (strain NATL2A), this protein is Hydroxyacylglutathione hydrolase.